A 179-amino-acid chain; its full sequence is Large ribosomal subunit protein uL5 (179 aa).

This sequence belongs to the universal ribosomal protein uL5 family. In terms of assembly, part of the 50S ribosomal subunit; part of the 5S rRNA/L5/L18/L25 subcomplex. Contacts the 5S rRNA and the P site tRNA. Forms a bridge to the 30S subunit in the 70S ribosome.

Functionally, this is one of the proteins that bind and probably mediate the attachment of the 5S RNA into the large ribosomal subunit, where it forms part of the central protuberance. In the 70S ribosome it contacts protein S13 of the 30S subunit (bridge B1b), connecting the 2 subunits; this bridge is implicated in subunit movement. Contacts the P site tRNA; the 5S rRNA and some of its associated proteins might help stabilize positioning of ribosome-bound tRNAs. This chain is Large ribosomal subunit protein uL5, found in Lachnoclostridium phytofermentans (strain ATCC 700394 / DSM 18823 / ISDg) (Clostridium phytofermentans).